The chain runs to 197 residues: Endoribonuclease YbeY (197 aa).

Zn(2+) is bound by residues H156, H160, and H166.

Belongs to the endoribonuclease YbeY family. It depends on Zn(2+) as a cofactor.

The protein localises to the cytoplasm. In terms of biological role, single strand-specific metallo-endoribonuclease involved in late-stage 70S ribosome quality control and in maturation of the 3' terminus of the 16S rRNA. The chain is Endoribonuclease YbeY from Cupriavidus metallidurans (strain ATCC 43123 / DSM 2839 / NBRC 102507 / CH34) (Ralstonia metallidurans).